The sequence spans 249 residues: MFPIKKRKAIKNNNINAAQIPKHIAIIMDGNGRWAKQKKMPRIKGHYEGMQTVKKITRYASDLGVKYLTLYAFSTENWSRPKDEVNYLMKLPGDFLNTFLPELIEKNVKVETIGFIDDLPDHTKKAVLEAKEKTKHNTGLTLVFALNYGGRKEIISAVQLIAERYKSGEISLDEISETHFNEYLFTANMPDPELLIRTSGEERLSNFLIWQCSYSEFVFIDEFWPDFNEESLAQCISIYQNRHRRFGGL.

Residue Asp-29 is part of the active site. Residue Asp-29 participates in Mg(2+) binding. Substrate contacts are provided by residues 30–33 (GNGR), Trp-34, Arg-42, His-46, and 74–76 (STE). Catalysis depends on Asn-77, which acts as the Proton acceptor. Residues Trp-78, Arg-80, Arg-197, and 203-205 (RLS) contribute to the substrate site. Glu-216 lines the Mg(2+) pocket.

Belongs to the UPP synthase family. In terms of assembly, homodimer. Requires Mg(2+) as cofactor.

The enzyme catalyses 8 isopentenyl diphosphate + (2E,6E)-farnesyl diphosphate = di-trans,octa-cis-undecaprenyl diphosphate + 8 diphosphate. Generates ditrans,octacis-undecaprenyl pyrophosphate (UPP) from isopentenyl pyrophosphate (IPP) and farnesyl diphosphate. UPP is the precursor of glycosyl carrier lipid in the biosynthesis of bacterial cell wall polysaccharide components such as peptidoglycan and lipopolysaccharide. The chain is Ditrans,polycis-undecaprenyl-diphosphate synthase ((2E,6E)-farnesyl-diphosphate specific) (uppS) from Micrococcus luteus (Micrococcus lysodeikticus).